A 335-amino-acid polypeptide reads, in one-letter code: Tetraacyldisaccharide 4'-kinase (335 aa).

51–58 serves as a coordination point for ATP; it reads HVGGAGKT.

The protein belongs to the LpxK family.

The enzyme catalyses a lipid A disaccharide + ATP = a lipid IVA + ADP + H(+). Its pathway is glycolipid biosynthesis; lipid IV(A) biosynthesis; lipid IV(A) from (3R)-3-hydroxytetradecanoyl-[acyl-carrier-protein] and UDP-N-acetyl-alpha-D-glucosamine: step 6/6. Its function is as follows. Transfers the gamma-phosphate of ATP to the 4'-position of a tetraacyldisaccharide 1-phosphate intermediate (termed DS-1-P) to form tetraacyldisaccharide 1,4'-bis-phosphate (lipid IVA). This is Tetraacyldisaccharide 4'-kinase from Bradyrhizobium sp. (strain ORS 278).